The following is a 130-amino-acid chain: uncharacterized protein (130 aa).

The residue at position 1 (methionine 1) is an N-acetylmethionine.

In terms of assembly, homotetramer.

This is an uncharacterized protein from Arabidopsis thaliana (Mouse-ear cress).